The primary structure comprises 620 residues: 1-deoxy-D-xylulose-5-phosphate synthase (620 aa).

Residues His-80 and 121 to 123 (GHS) contribute to the thiamine diphosphate site. Asp-152 serves as a coordination point for Mg(2+). Residues 153 to 154 (GA), Asn-181, Tyr-288, and Glu-370 contribute to the thiamine diphosphate site. Asn-181 is a Mg(2+) binding site.

This sequence belongs to the transketolase family. DXPS subfamily. In terms of assembly, homodimer. Requires Mg(2+) as cofactor. The cofactor is thiamine diphosphate.

The enzyme catalyses D-glyceraldehyde 3-phosphate + pyruvate + H(+) = 1-deoxy-D-xylulose 5-phosphate + CO2. It functions in the pathway metabolic intermediate biosynthesis; 1-deoxy-D-xylulose 5-phosphate biosynthesis; 1-deoxy-D-xylulose 5-phosphate from D-glyceraldehyde 3-phosphate and pyruvate: step 1/1. Catalyzes the acyloin condensation reaction between C atoms 2 and 3 of pyruvate and glyceraldehyde 3-phosphate to yield 1-deoxy-D-xylulose-5-phosphate (DXP). The polypeptide is 1-deoxy-D-xylulose-5-phosphate synthase (Sodalis glossinidius (strain morsitans)).